The chain runs to 390 residues: Transforming growth factor beta-1 proprotein (390 aa).

An N-terminal signal peptide occupies residues 1–29 (MPPSGLRLLPLLLPLPWLLVLTPGRPAAG). Residues 30–74 (LSTCKTIDMELVKRKRIEAIRGQILSKLRLASPPSQGEVPPGPLP) form a straightjacket domain region. Positions 75–271 (EAVLALYNST…ATPLERAQHL (197 aa)) are arm domain. Asn-82, Asn-136, and Asn-176 each carry an N-linked (GlcNAc...) asparagine glycan. Residues 226 to 252 (DSKDNKLHVEINGISPKRRGDLGTIHD) are bowtie tail. The short motif at 244-246 (RGD) is the Cell attachment site element. Disulfide bonds link Cys-285–Cys-294, Cys-293–Cys-356, Cys-322–Cys-387, and Cys-326–Cys-389.

Belongs to the TGF-beta family. In terms of assembly, homodimer; disulfide-linked. Interacts with the serine proteases, HTRA1 and HTRA3: the interaction with either inhibits TGFB1-mediated signaling and the HTRA protease activity is required for this inhibition. May interact with THSD4; this interaction may lead to sequestration by FBN1 microfibril assembly and attenuation of TGFB signaling. Interacts with CD109, DPT and ASPN. Interacts with EFEMP2. Interacts with TSKU; the interaction contributes to regulation of the hair cycle. Interacts with TGFBR3. Homodimer; disulfide-linked. Interacts with transforming growth factor beta-1 (TGF-beta-1) chain; interaction is non-covalent and maintains TGF-beta-1 in a latent state; each latency-associated peptide (LAP) monomer interacts with TGF-beta-1 in the other monomer. Interacts with LTBP1; leading to regulation of TGF-beta-1 activation. Interacts with LRRC32/GARP; leading to regulation of TGF-beta-1 activation on the surface of activated regulatory T-cells (Tregs). Interacts with LRRC33/NRROS; leading to regulation of TGF-beta-1 activation in macrophages and microglia. Interacts (via cell attachment site) with integrins ITGAV and ITGB6 (ITGAV:ITGB6), leading to release of the active TGF-beta-1. Interacts with NREP; the interaction results in a decrease in TGFB1 autoinduction. Interacts with HSP90AB1; inhibits latent TGFB1 activation. As to quaternary structure, homodimer; disulfide-linked. Interacts with TGF-beta receptors (TGFBR1 and TGFBR2), leading to signal transduction. Post-translationally, transforming growth factor beta-1 proprotein: The precursor proprotein is cleaved in the Golgi apparatus by FURIN to form Transforming growth factor beta-1 (TGF-beta-1) and Latency-associated peptide (LAP) chains, which remain non-covalently linked, rendering TGF-beta-1 inactive. In terms of processing, N-glycosylated. Deglycosylation leads to activation of Transforming growth factor beta-1 (TGF-beta-1); mechanisms triggering deglycosylation-driven activation of TGF-beta-1 are however unclear. In terms of tissue distribution, expressed in cardiomyocytes. Weakly expressed in the mammary glands, with a slight increase of expression following onset of involution.

It localises to the secreted. It is found in the extracellular space. The protein localises to the extracellular matrix. Transforming growth factor beta-1 proprotein: Precursor of the Latency-associated peptide (LAP) and Transforming growth factor beta-1 (TGF-beta-1) chains, which constitute the regulatory and active subunit of TGF-beta-1, respectively. Functionally, required to maintain the Transforming growth factor beta-1 (TGF-beta-1) chain in a latent state during storage in extracellular matrix. Associates non-covalently with TGF-beta-1 and regulates its activation via interaction with 'milieu molecules', such as LTBP1, LRRC32/GARP and LRRC33/NRROS, that control activation of TGF-beta-1. Interaction with LRRC33/NRROS regulates activation of TGF-beta-1 in macrophages and microglia. Interaction with LRRC32/GARP controls activation of TGF-beta-1 on the surface of activated regulatory T-cells (Tregs). Interaction with integrins (ITGAV:ITGB6 or ITGAV:ITGB8) results in distortion of the Latency-associated peptide chain and subsequent release of the active TGF-beta-1. Its function is as follows. Multifunctional protein that regulates the growth and differentiation of various cell types and is involved in various processes, such as normal development, immune function, microglia function and responses to neurodegeneration. Activation into mature form follows different steps: following cleavage of the proprotein in the Golgi apparatus, Latency-associated peptide (LAP) and Transforming growth factor beta-1 (TGF-beta-1) chains remain non-covalently linked rendering TGF-beta-1 inactive during storage in extracellular matrix. At the same time, LAP chain interacts with 'milieu molecules', such as LTBP1, LRRC32/GARP and LRRC33/NRROS that control activation of TGF-beta-1 and maintain it in a latent state during storage in extracellular milieus. TGF-beta-1 is released from LAP by integrins (ITGAV:ITGB6 or ITGAV:ITGB8): integrin-binding to LAP stabilizes an alternative conformation of the LAP bowtie tail and results in distortion of the LAP chain and subsequent release of the active TGF-beta-1. Once activated following release of LAP, TGF-beta-1 acts by binding to TGF-beta receptors (TGFBR1 and TGFBR2), which transduce signal. While expressed by many cells types, TGF-beta-1 only has a very localized range of action within cell environment thanks to fine regulation of its activation by Latency-associated peptide chain (LAP) and 'milieu molecules'. Plays an important role in bone remodeling: acts as a potent stimulator of osteoblastic bone formation, causing chemotaxis, proliferation and differentiation in committed osteoblasts. Can promote either T-helper 17 cells (Th17) or regulatory T-cells (Treg) lineage differentiation in a concentration-dependent manner. At high concentrations, leads to FOXP3-mediated suppression of RORC and down-regulation of IL-17 expression, favoring Treg cell development. At low concentrations in concert with IL-6 and IL-21, leads to expression of the IL-17 and IL-23 receptors, favoring differentiation to Th17 cells. Stimulates sustained production of collagen through the activation of CREB3L1 by regulated intramembrane proteolysis (RIP). Mediates SMAD2/3 activation by inducing its phosphorylation and subsequent translocation to the nucleus. Positively regulates odontoblastic differentiation in dental papilla cells, via promotion of IPO7-mediated translocation of phosphorylated SMAD2 to the nucleus and subsequent transcription of target genes. Can induce epithelial-to-mesenchymal transition (EMT) and cell migration in various cell types. The sequence is that of Transforming growth factor beta-1 proprotein from Mus musculus (Mouse).